Consider the following 246-residue polypeptide: DNA repair protein RecO (246 aa).

This sequence belongs to the RecO family.

Its function is as follows. Involved in DNA repair and RecF pathway recombination. The polypeptide is DNA repair protein RecO (Methylorubrum extorquens (strain PA1) (Methylobacterium extorquens)).